The primary structure comprises 291 residues: ATP synthase gamma chain (291 aa).

This sequence belongs to the ATPase gamma chain family. In terms of assembly, F-type ATPases have 2 components, CF(1) - the catalytic core - and CF(0) - the membrane proton channel. CF(1) has five subunits: alpha(3), beta(3), gamma(1), delta(1), epsilon(1). CF(0) has three main subunits: a, b and c.

Its subcellular location is the cell membrane. Its function is as follows. Produces ATP from ADP in the presence of a proton gradient across the membrane. The gamma chain is believed to be important in regulating ATPase activity and the flow of protons through the CF(0) complex. This Streptococcus equi subsp. zooepidemicus (strain MGCS10565) protein is ATP synthase gamma chain.